A 145-amino-acid chain; its full sequence is Probable transport accessory protein MmpS2 (145 aa).

A helical membrane pass occupies residues 11–31 (MWLLLAIVVVAVVGGLGIYRL).

Belongs to the MmpS family.

Its subcellular location is the cell membrane. This chain is Probable transport accessory protein MmpS2 (mmpS2), found in Mycobacterium bovis (strain ATCC BAA-935 / AF2122/97).